A 248-amino-acid polypeptide reads, in one-letter code: MWLGVITLFPEMFRAVTDFGVTGRAVKNGLLELHTWNPRDFTHDRHNTVDDRPYGGGPGMLMMVQPLRDAIHAAKAAAGEEAKVIYLSPQGRKLDQQGVTELAKSSRLILVCGRYEGIDERIIQTEVDEEWSVGDYVLSGGELPAMTMIDAVSRLVPGVLGKQASAEQDSFSDGLLDCPHYTRPESLDGLDVPAVLLSGNHEQIRLWRLQQSLGRTLLRRPELLQNLALTDEQSTLLAQFVEAMDKHA.

S-adenosyl-L-methionine is bound by residues Gly113 and 133 to 138; that span reads VGDYVL.

This sequence belongs to the RNA methyltransferase TrmD family. As to quaternary structure, homodimer.

Its subcellular location is the cytoplasm. It carries out the reaction guanosine(37) in tRNA + S-adenosyl-L-methionine = N(1)-methylguanosine(37) in tRNA + S-adenosyl-L-homocysteine + H(+). Specifically methylates guanosine-37 in various tRNAs. This is tRNA (guanine-N(1)-)-methyltransferase from Shewanella sp. (strain W3-18-1).